A 203-amino-acid chain; its full sequence is Auxin-induced protein 22E (203 aa).

The EAR-like (transcriptional repression) signature appears at L15–L19. The tract at residues L15 to A77 is disordered. Residues S43–C52 are compositionally biased toward basic and acidic residues. Low complexity predominate over residues S58–S67. Residues G107–G199 form the PB1 domain.

It belongs to the Aux/IAA family. In terms of assembly, homodimers and heterodimers.

Its subcellular location is the nucleus. Functionally, aux/IAA proteins are short-lived transcriptional factors that function as repressors of early auxin response genes at low auxin concentrations. Repression is thought to result from the interaction with auxin response factors (ARFs), proteins that bind to the auxin-responsive promoter element (AuxRE). Formation of heterodimers with ARF proteins may alter their ability to modulate early auxin response genes expression. The polypeptide is Auxin-induced protein 22E (AUX22E) (Vigna radiata var. radiata (Mung bean)).